The sequence spans 594 residues: Elongation factor 4 (594 aa).

A tr-type G domain is found at 2 to 184; that stretch reads KNIRNFSIIA…TIVAKVPAPE (183 aa). GTP contacts are provided by residues 14 to 19 and 131 to 134; these read DHGKST and NKID.

It belongs to the TRAFAC class translation factor GTPase superfamily. Classic translation factor GTPase family. LepA subfamily.

It localises to the cell inner membrane. The catalysed reaction is GTP + H2O = GDP + phosphate + H(+). In terms of biological role, required for accurate and efficient protein synthesis under certain stress conditions. May act as a fidelity factor of the translation reaction, by catalyzing a one-codon backward translocation of tRNAs on improperly translocated ribosomes. Back-translocation proceeds from a post-translocation (POST) complex to a pre-translocation (PRE) complex, thus giving elongation factor G a second chance to translocate the tRNAs correctly. Binds to ribosomes in a GTP-dependent manner. The chain is Elongation factor 4 from Francisella philomiragia subsp. philomiragia (strain ATCC 25017 / CCUG 19701 / FSC 153 / O#319-036).